The sequence spans 378 residues: SWI/SNF-related matrix-associated actin-dependent regulator of chromatin subfamily B member 1 (378 aa).

Residues 1 to 106 (MIMALSKTFG…DEKYKAVSIS (106 aa)) form a DNA-binding region.

The protein belongs to the SNF5 family. As to quaternary structure, component of the multiprotein chromatin-remodeling complexes SWI/SNF. Component of neural progenitors-specific chromatin remodeling complex (npBAF complex) and the neuron-specific chromatin remodeling complex (nBAF complex). Component of the BAF (SWI/SNF) chromatin remodeling complex. Component of the SWI/SNF-B (PBAF) chromatin remodeling complex. Binds to double-stranded DNA.

Its subcellular location is the nucleus. In terms of biological role, involved in chromatin-remodeling. Core component of the BAF (SWI/SNF) complex. This ATP-dependent chromatin-remodeling complex plays important roles in cell proliferation and differentiation, in cellular antiviral activities and inhibition of tumor formation. Belongs to the neural progenitors-specific chromatin remodeling complex (npBAF complex) and the neuron-specific chromatin remodeling complex (nBAF complex) and may play a role in neural development. In Xenopus laevis (African clawed frog), this protein is SWI/SNF-related matrix-associated actin-dependent regulator of chromatin subfamily B member 1 (smarcb1).